We begin with the raw amino-acid sequence, 406 residues long: S-adenosylmethionine synthase (406 aa).

His17 contributes to the ATP binding site. Residue Asp19 coordinates Mg(2+). A K(+)-binding site is contributed by Glu45. L-methionine-binding residues include Glu58 and Gln101. A flexible loop region spans residues 101–111 (QSAEINQGVAR). Residues 178–180 (DGK), Asp258, 264–265 (RK), Ala281, and Lys285 contribute to the ATP site. Position 258 (Asp258) interacts with L-methionine. Lys289 contacts L-methionine.

It belongs to the AdoMet synthase family. In terms of assembly, homotetramer; dimer of dimers. The cofactor is Mg(2+). Requires K(+) as cofactor.

It localises to the cytoplasm. It catalyses the reaction L-methionine + ATP + H2O = S-adenosyl-L-methionine + phosphate + diphosphate. The protein operates within amino-acid biosynthesis; S-adenosyl-L-methionine biosynthesis; S-adenosyl-L-methionine from L-methionine: step 1/1. Its function is as follows. Catalyzes the formation of S-adenosylmethionine (AdoMet) from methionine and ATP. The overall synthetic reaction is composed of two sequential steps, AdoMet formation and the subsequent tripolyphosphate hydrolysis which occurs prior to release of AdoMet from the enzyme. The chain is S-adenosylmethionine synthase from Bifidobacterium longum (strain NCC 2705).